Consider the following 545-residue polypeptide: CTP synthase (545 aa).

The interval 1 to 266 (MTTNYIFVTG…DDYICKRFSL (266 aa)) is amidoligase domain. CTP is bound at residue Ser-14. Ser-14 contributes to the UTP binding site. Residues 15 to 20 (SLGKGI) and Asp-72 each bind ATP. Asp-72 and Glu-140 together coordinate Mg(2+). Residues 147 to 149 (DIE), 187 to 192 (KTKPTQ), and Lys-223 contribute to the CTP site. UTP contacts are provided by residues 187 to 192 (KTKPTQ) and Lys-223. 239–241 (KDV) is a binding site for ATP. Positions 291–542 (TIGMIGKYVE…VKAAGDYQKR (252 aa)) constitute a Glutamine amidotransferase type-1 domain. Residue Gly-352 coordinates L-glutamine. Catalysis depends on Cys-379, which acts as the Nucleophile; for glutamine hydrolysis. L-glutamine contacts are provided by residues 380–383 (LGMQ), Glu-403, and Arg-470. Residues His-515 and Glu-517 contribute to the active site.

The protein belongs to the CTP synthase family. In terms of assembly, homotetramer.

It catalyses the reaction UTP + L-glutamine + ATP + H2O = CTP + L-glutamate + ADP + phosphate + 2 H(+). The enzyme catalyses L-glutamine + H2O = L-glutamate + NH4(+). It carries out the reaction UTP + NH4(+) + ATP = CTP + ADP + phosphate + 2 H(+). It functions in the pathway pyrimidine metabolism; CTP biosynthesis via de novo pathway; CTP from UDP: step 2/2. With respect to regulation, allosterically activated by GTP, when glutamine is the substrate; GTP has no effect on the reaction when ammonia is the substrate. The allosteric effector GTP functions by stabilizing the protein conformation that binds the tetrahedral intermediate(s) formed during glutamine hydrolysis. Inhibited by the product CTP, via allosteric rather than competitive inhibition. Catalyzes the ATP-dependent amination of UTP to CTP with either L-glutamine or ammonia as the source of nitrogen. Regulates intracellular CTP levels through interactions with the four ribonucleotide triphosphates. This Yersinia pseudotuberculosis serotype O:1b (strain IP 31758) protein is CTP synthase.